A 91-amino-acid polypeptide reads, in one-letter code: Small ribosomal subunit protein uS19 (91 aa).

It belongs to the universal ribosomal protein uS19 family.

In terms of biological role, protein S19 forms a complex with S13 that binds strongly to the 16S ribosomal RNA. This is Small ribosomal subunit protein uS19 from Prochlorococcus marinus (strain NATL1A).